The primary structure comprises 1865 residues: MTRWVPTKREEKYGVAFYNYDARGADELSLQIGDTVHILETYEGWYRGYTLRKKSKKGIFPASYIHLKEAIVEGKGQHETVIPGDLPLIQEVTTTLREWSTIWRQLYVQDNREMFRSVRHMIYDLIEWRSQILSGTLPQDELKELKKKVTAKIDYGNRILDLDLVVRDEDGNILDPELTSTISLFRAHEVASKQVEERLQEEKSQKQNMDINRQAKFAATPSLALFVNLKNVVCKIGEDAEVLMSLYDPMESKFISENYLVRWSSSGLPKDIDRLHNLRAVFTDLGSKDLKREKISFVCQIVRVGRMELRDSNTRKLTSGLRRPFGVAVMDVTDIINGKVDDEDKQHFIPFQAVAGENDFLQTVINKVIAAKEVNHKGQGLWVTLKLLPGDIHQIRKEFPHLVDRTTAVARKTGFPEIIMPGDVRNDIYVTLVQGDFDKGSKTTAKNVEVTVSVYDEDGKRLEHVIFPGAGDEAISEYKSVIYYQVKQPRWFETLKVAIPIEDVNRSHLRFTFRHRSSQDSKDKSEKIFALAFVKLMRYDGTTLRDGEHDLIVYKAEAKKLEDAATYLSLPSTKGELEEKGHSATGKGMQSLGSCTISKDSFQISTLVCSTKLTQNVDLLGLLKWRSNTNLLQQNLRQLMKVDGGEVVKFLQDTLDALFNIMMENSESETFDTLVFDALVFIIGLIADRKFQHFNPVLETYIKKHFSATLAYTKLTKVLRTYVASAEKPGVNEQLYKAIKALEYIFKFIVRSRVLFNQLYENKGEADFVESLLQLFRSINDMMSSLSELTVRVKGAALKYLPTIVNDVKLVFDPKELSKMFTEFILNVPAGLLTVQKLSCLIEIVHSDLFTQHDCREILLPMMTDQLKYHLERQEELEACCQLLSNILEVLYRKDVGPTQRHVQIIMETLLRTVNRTVISMGRDSELIGNFVACMTAILRQMEDYHYAHLIKTFGKMRTDVVDFLMETFIMFKNLIGKNVYPFDWVIMNTMQNKVFLRAINQYADMLNKRFLDQANFELQLWNNYFHLAVAFLTQESLQLENFSSAKRAKILNKYGDMRRQIGFEIRDMWYNLGQHKIKFIPEMVGPILEMTLIPETELRKATLPIFFDMMQCEFHSTRSFQMFENEIITKLDHEVEGGRGDEQYKVLFDKILLEHCRKHKYLAKTGETFVKLVVRLMERLLDYRTIMHDENKDNRMSCTVNVLNFYKEIEREEMYIRYLYKLCDLHKECDNYTEAAYTLLLHAKLLKWSEDVCAAHLTQRDGFQATTQGQLKEQLYQEIIHYFDKGKMWEEAIALGKELAEQYETEMFDYEQLSELLKKQAQFYENIVKVIRPKPDYFAVGYYGQGFPSFLRGKVFIYRGKEYERREDFEARLLTQFPNAEKMKTTSPPGDDIKTSPGQYIQCFTVKPKLDLPPRFHRPVSEQIVSFYRVNEVQRFEYSRPIRKGEKNPDNEFANMWIERTIYTTAYKLPGILRWFEVKSVFMVEISPLENAIETMQLTNDKISSMVQQHLDDPGLPINPLSMLLNGIVDPAVMGGFANYEKAFFTDRYLQEHPEAHGQIEKLKDLIAWQIPFLAEGIRIHGDKVTEALRPFHERMEACFKQLKEKVEKQYGVRTMPSGLDDRRGSRPRSMVRSFTMPSSSRPLSVASVSSFSSDSTPSRPGSDGFALEPLLPKKMHSRSQDKLDKDDPDKEKKDKKKEKRNSKHQEIFDKEFKPADSSLQQSEAVILSETISPLRPQRPKSQVINVIGNERRFSVSPASPSSQQTPPPVTPRAKLSFSIQPSLELNGMMGMDVADVPPPLPLKGNMADYGNLMENQDMMVSPTSPPPPPPQRQQPPPLPSKTPPPPPPKTTRKQTSVDSGIVQ.

The SH3 domain maps to 9 to 70 (REEKYGVAFY…PASYIHLKEA (62 aa)). Residues 425-609 (RNDIYVTLVQ…DSFQISTLVC (185 aa)) form the C2 DOCK-type domain. The DOCKER domain occupies 1207–1617 (YKEIEREEMY…VEKQYGVRTM (411 aa)). The interval 1613 to 1723 (GVRTMPSGLD…FKPADSSLQQ (111 aa)) is disordered. Residues 1639–1664 (PSSSRPLSVASVSSFSSDSTPSRPGS) show a composition bias toward low complexity. The segment covering 1680 to 1694 (RSQDKLDKDDPDKEK) has biased composition (basic and acidic residues). The residue at position 1681 (Ser1681) is a Phosphoserine. A phosphoinositide-binding region spans residues 1687–1695 (KDDPDKEKK). Residues 1695–1704 (KDKKKEKRNS) are compositionally biased toward basic residues. Basic and acidic residues predominate over residues 1705–1716 (KHQEIFDKEFKP). Phosphoserine occurs at positions 1743, 1756, 1761, and 1764. Disordered regions lie at residues 1753–1778 (RRFSVSPASPSSQQTPPPVTPRAKLS) and 1801–1865 (PLPL…GIVQ). The segment covering 1756-1766 (SVSPASPSSQQ) has biased composition (low complexity). Thr1767 and Thr1772 each carry phosphothreonine. The segment at 1793 to 1819 (MDVADVPPPLPLKGNMADYGNLMENQD) is interaction with NCK2 second and third SH3 domain (minor). Residues 1799–1805 (PPPLPLK) carry the SH3-binding; interaction with CRK motif. An interaction with NCK2 third SH3 domain (major) region spans residues 1820 to 1836 (MMVSPTSPPPPPPQRQQ). The span at 1825-1851 (TSPPPPPPQRQQPPPLPSKTPPPPPPK) shows a compositional bias: pro residues. The interval 1837–1852 (PPPLPSKTPPPPPPKT) is interaction with NCK2 (minor). Residues 1838–1843 (PPLPSK) carry the SH3-binding; interaction with CRK motif. Residue Ser1858 is modified to Phosphoserine.

It belongs to the DOCK family. Interacts with the SH3 domains of CRK and NCK2 via multiple sites. Interacts with nucleotide-free RAC1 via its DOCKER domain. Interacts with ELMO1, ELMO2 and probably ELMO3 via its SH3 domain. Interacts with RAC1. Interacts with ELMO1 and ADGRB1. Identified in a complex with AUTS2 and ELMO2.

The protein resides in the cytoplasm. It localises to the membrane. Functionally, involved in cytoskeletal rearrangements required for phagocytosis of apoptotic cells and cell motility. Along with DOCK1, mediates CRK/CRKL regulation of epithelial and endothelial cell spreading and migration on type IV collagen. Functions as a guanine nucleotide exchange factor (GEF), which activates Rac Rho small GTPases by exchanging bound GDP for free GTP. Its GEF activity may be enhanced by ELMO1. In Mus musculus (Mouse), this protein is Dedicator of cytokinesis protein 1 (Dock1).